Consider the following 159-residue polypeptide: Small ribosomal subunit protein uS5c (159 aa).

In terms of domain architecture, S5 DRBM spans 17-80 (WEERVVSVQR…TDGKKNVITV (64 aa)).

This sequence belongs to the universal ribosomal protein uS5 family. Part of the 30S ribosomal subunit. Contacts protein S4.

Its subcellular location is the plastid. The protein resides in the chloroplast. With S4 and S12 plays an important role in translational accuracy. This Emiliania huxleyi (Coccolithophore) protein is Small ribosomal subunit protein uS5c (rps5).